The primary structure comprises 52 residues: Protein RepA (52 aa).

Residues 20 to 40 constitute a DNA-binding region (H-T-H motif); the sequence is KLEELAQKYGMTKSGLVNFLV.

The protein belongs to the transcriptional regulatory CopG/NikR family. In terms of assembly, homodimer.

Regulates the plasmid copy number. RepA binds to the repAB promoter thus controlling the synthesis of the plasmid replication initiator protein RepB. The sequence is that of Protein RepA (repA) from Lactiplantibacillus plantarum (Lactobacillus plantarum).